Consider the following 568-residue polypeptide: 2-succinyl-5-enolpyruvyl-6-hydroxy-3-cyclohexene-1-carboxylate synthase (568 aa).

This sequence belongs to the TPP enzyme family. MenD subfamily. Homodimer. The cofactor is Mg(2+). Requires Mn(2+) as cofactor. It depends on thiamine diphosphate as a cofactor.

It catalyses the reaction isochorismate + 2-oxoglutarate + H(+) = 5-enolpyruvoyl-6-hydroxy-2-succinyl-cyclohex-3-ene-1-carboxylate + CO2. It functions in the pathway quinol/quinone metabolism; 1,4-dihydroxy-2-naphthoate biosynthesis; 1,4-dihydroxy-2-naphthoate from chorismate: step 2/7. The protein operates within cofactor biosynthesis; phylloquinone biosynthesis. In terms of biological role, catalyzes the thiamine diphosphate-dependent decarboxylation of 2-oxoglutarate and the subsequent addition of the resulting succinic semialdehyde-thiamine pyrophosphate anion to isochorismate to yield 2-succinyl-5-enolpyruvyl-6-hydroxy-3-cyclohexene-1-carboxylate (SEPHCHC). This is 2-succinyl-5-enolpyruvyl-6-hydroxy-3-cyclohexene-1-carboxylate synthase from Synechococcus sp. (strain CC9902).